An 88-amino-acid polypeptide reads, in one-letter code: Elongation factor 1-beta (88 aa).

It belongs to the EF-1-beta/EF-1-delta family.

In terms of biological role, promotes the exchange of GDP for GTP in EF-1-alpha/GDP, thus allowing the regeneration of EF-1-alpha/GTP that could then be used to form the ternary complex EF-1-alpha/GTP/AAtRNA. The chain is Elongation factor 1-beta from Natronomonas pharaonis (strain ATCC 35678 / DSM 2160 / CIP 103997 / JCM 8858 / NBRC 14720 / NCIMB 2260 / Gabara) (Halobacterium pharaonis).